The following is a 478-amino-acid chain: Membrane-bound lytic murein transglycosylase F (478 aa).

Positions 1-22 (MTRFLFAIILGLLLTACQQETV) are cleaved as a signal peptide. Positions 23–257 (EETEFVPHKL…HLNEKYFGHV (235 aa)) are non-LT domain. Residues 258-478 (KRFDYIDTRA…PGTLSPDKPK (221 aa)) form an LT domain region. Residue Glu-302 is part of the active site. The disordered stretch occupies residues 447–478 (KQQNSEEVAPSDLTAEETPVPAPGTLSPDKPK).

The protein in the N-terminal section; belongs to the bacterial solute-binding protein 3 family. In the C-terminal section; belongs to the transglycosylase Slt family.

The protein resides in the cell outer membrane. It carries out the reaction Exolytic cleavage of the (1-&gt;4)-beta-glycosidic linkage between N-acetylmuramic acid (MurNAc) and N-acetylglucosamine (GlcNAc) residues in peptidoglycan, from either the reducing or the non-reducing ends of the peptidoglycan chains, with concomitant formation of a 1,6-anhydrobond in the MurNAc residue.. In terms of biological role, murein-degrading enzyme that degrades murein glycan strands and insoluble, high-molecular weight murein sacculi, with the concomitant formation of a 1,6-anhydromuramoyl product. Lytic transglycosylases (LTs) play an integral role in the metabolism of the peptidoglycan (PG) sacculus. Their lytic action creates space within the PG sacculus to allow for its expansion as well as for the insertion of various structures such as secretion systems and flagella. The chain is Membrane-bound lytic murein transglycosylase F from Shewanella oneidensis (strain ATCC 700550 / JCM 31522 / CIP 106686 / LMG 19005 / NCIMB 14063 / MR-1).